The following is a 405-amino-acid chain: 8-amino-7-oxononanoate synthase (405 aa).

Arg-23 provides a ligand contact to substrate. Position 114–115 (114–115 (GY)) interacts with pyridoxal 5'-phosphate. His-139 contacts substrate. The pyridoxal 5'-phosphate site is built by Ser-185, His-213, and Thr-245. Lys-248 is subject to N6-(pyridoxal phosphate)lysine. Thr-366 is a binding site for substrate.

The protein belongs to the class-II pyridoxal-phosphate-dependent aminotransferase family. BioF subfamily. In terms of assembly, homodimer. Pyridoxal 5'-phosphate serves as cofactor.

The catalysed reaction is 6-carboxyhexanoyl-[ACP] + L-alanine + H(+) = (8S)-8-amino-7-oxononanoate + holo-[ACP] + CO2. It functions in the pathway cofactor biosynthesis; biotin biosynthesis. In terms of biological role, catalyzes the decarboxylative condensation of pimeloyl-[acyl-carrier protein] and L-alanine to produce 8-amino-7-oxononanoate (AON), [acyl-carrier protein], and carbon dioxide. This is 8-amino-7-oxononanoate synthase from Delftia acidovorans (strain DSM 14801 / SPH-1).